A 489-amino-acid polypeptide reads, in one-letter code: uncharacterized protein (489 aa).

Helical transmembrane passes span 1–21 (MNAALIIIFGVLLLSIFLGIR), 40–60 (FGTVFVFLLMAGEIYTTFTFL), 74–94 (FYIIAYGCLAYILSYWLLPAV), 117–137 (PLLGILVSLVGIAALIPYLVL), 158–178 (AAIWIGAVSITVYVMVSGIHG), 188–208 (IMILVVVLFLGVYLPIHYYGG), 234–254 (AWFSSTVLLTALGFYMWPHTF), 271–291 (IIMPLYQLVLLFVLFVGFAAI), 318–338 (FVGIIGAAGLLTALVPGSMIL), 362–382 (VSALAKFLVPVIALISVYFTF), 388–408 (IVTLLLMGYSLVTQLFPALLF), 422–442 (FAGIIAGVGAVTYITMTETTI), and 456–476 (LNVGIVALLLNITVMMAVSLM).

Belongs to the sodium:solute symporter (SSF) (TC 2.A.21) family.

It is found in the cell membrane. This is an uncharacterized protein from Bacillus subtilis (strain 168).